Reading from the N-terminus, the 186-residue chain is UPF0301 protein APL_0232 (186 aa).

Belongs to the UPF0301 (AlgH) family.

This Actinobacillus pleuropneumoniae serotype 5b (strain L20) protein is UPF0301 protein APL_0232.